Reading from the N-terminus, the 484-residue chain is Cysteine desulfurase, mitochondrial (484 aa).

Low complexity predominate over residues 29-42 (LATSASTSSSTTTS). The disordered stretch occupies residues 29–69 (LATSASTSSSTTTSNAETGELHVSTPLDSPSVHPPDGSSIS). Pyridoxal 5'-phosphate-binding positions include 153-154 (AT), Asn233, Gln261, and 281-283 (SSH). Position 284 is an N6-(pyridoxal phosphate)lysine (Lys284). Position 321 (Thr321) interacts with pyridoxal 5'-phosphate. The active-site Cysteine persulfide intermediate is the Cys408. Residue Cys408 participates in [2Fe-2S] cluster binding.

This sequence belongs to the class-V pyridoxal-phosphate-dependent aminotransferase family. NifS/IscS subfamily. It depends on pyridoxal 5'-phosphate as a cofactor.

Its subcellular location is the mitochondrion. It catalyses the reaction (sulfur carrier)-H + L-cysteine = (sulfur carrier)-SH + L-alanine. In terms of biological role, catalyzes the removal of elemental sulfur from cysteine to produce alanine. It supplies the inorganic sulfur for iron-sulfur (Fe-S) clusters. Plays a role in both tRNA-processing and mitochondrial metabolism. Involved in the 2-thio-modification of both 5-carboxymethylaminomethyl-2-thiouridine in mitochondrial tRNAs and 5-methoxycarbonylmethyl-2-thiouridine (mcm5s2U) in cytoplasmic tRNAs. The sequence is that of Cysteine desulfurase, mitochondrial from Candida maltosa (Yeast).